Consider the following 435-residue polypeptide: Transmembrane protein 130 (435 aa).

Residues 1–24 form the signal peptide; it reads MAQAVWSRLGRILWLACLLPWAPA. Over 25-339 the chain is Extracellular; it reads GVAAGLYELN…IQVWPSRIQP (315 aa). 3 N-linked (GlcNAc...) asparagine glycosylation sites follow: Asn-34, Asn-197, and Asn-300. One can recognise a PKD domain in the interval 147 to 233; it reads WPSSYLTKTV…AVKQKTGDFS (87 aa). The chain crosses the membrane as a helical span at residues 340-360; it reads AVFAFPCATLITVMLAFIMYM. The Cytoplasmic portion of the chain corresponds to 361-435; that stretch reads TLRNATQQKD…LYKSVKTYTV (75 aa).

The protein localises to the golgi apparatus membrane. The polypeptide is Transmembrane protein 130 (TMEM130) (Homo sapiens (Human)).